We begin with the raw amino-acid sequence, 342 residues long: Nuclear distribution protein nudE homolog 1 (342 aa).

Residues 45–189 are a coiled coil; that stretch reads REYEAELETQ…ELAVQQKQEK (145 aa). The tract at residues 89-157 is interaction with PAFAH1B1; sequence EWYRQVSALE…ERNAFLESEL (69 aa). Disordered regions lie at residues 182–203 and 320–342; these read AVQQ…TERT and GTRP…KMLL. The span at 322–342 shows a compositional bias: polar residues; the sequence is RPSSTPGPMSHPSQSVVKMLL.

This sequence belongs to the nudE family. As to quaternary structure, self-associates. Interacts with PAFAH1B1. In terms of processing, phosphorylated in mitosis.

It is found in the cytoplasm. Its subcellular location is the cytoskeleton. The protein localises to the microtubule organizing center. The protein resides in the centrosome. It localises to the spindle. It is found in the chromosome. Its subcellular location is the centromere. The protein localises to the kinetochore. The protein resides in the cleavage furrow. It localises to the cytoplasmic vesicle membrane. Required for centrosome duplication and formation and function of the mitotic spindle. The polypeptide is Nuclear distribution protein nudE homolog 1 (NDE1) (Gallus gallus (Chicken)).